Reading from the N-terminus, the 312-residue chain is D-alanine--D-alanine ligase (312 aa).

The ATP-grasp domain occupies 102 to 307; sequence KKIFKMEGIP…FPELTDRLIK (206 aa). 136–191 serves as a coordination point for ATP; it reads IKEVGVPAVVKANTQGSTIGITFVHVKEKMAEAIESALKYDQDVLVEQFVAGTEVT. Mg(2+)-binding residues include Asp262, Glu274, and Asn276.

The protein belongs to the D-alanine--D-alanine ligase family. Mg(2+) serves as cofactor. Mn(2+) is required as a cofactor.

The protein localises to the cytoplasm. It carries out the reaction 2 D-alanine + ATP = D-alanyl-D-alanine + ADP + phosphate + H(+). It functions in the pathway cell wall biogenesis; peptidoglycan biosynthesis. Cell wall formation. This chain is D-alanine--D-alanine ligase, found in Desulforamulus reducens (strain ATCC BAA-1160 / DSM 100696 / MI-1) (Desulfotomaculum reducens).